The following is a 54-amino-acid chain: Sec-independent protein translocase protein TatA (54 aa).

A helical membrane pass occupies residues 1–21 (MGMSFSHLLIVLLIIFVLFGA).

Belongs to the TatA/E family. The Tat system comprises two distinct complexes: a TatABC complex, containing multiple copies of TatA, TatB and TatC subunits, and a separate TatA complex, containing only TatA subunits. Substrates initially bind to the TatABC complex, which probably triggers association of the separate TatA complex to form the active translocon.

The protein localises to the cell inner membrane. Part of the twin-arginine translocation (Tat) system that transports large folded proteins containing a characteristic twin-arginine motif in their signal peptide across membranes. TatA could form the protein-conducting channel of the Tat system. This is Sec-independent protein translocase protein TatA from Rickettsia canadensis (strain McKiel).